The primary structure comprises 108 residues: V-type proton ATPase subunit G (108 aa).

Basic and acidic residues predominate over residues 48–60; the sequence is YASKKEEEFKKSE. Positions 48 to 89 are disordered; sequence YASKKEEEFKKSESQASGIYSQAEAESKKQVQDTFASIETSS. Positions 79–89 are enriched in polar residues; it reads QDTFASIETSS.

The protein belongs to the V-ATPase G subunit family. V-ATPase is a heteromultimeric enzyme composed of a peripheral catalytic V1 complex (components A to H) attached to an integral membrane V0 proton pore complex (components: a, c, c', c'', d, e, f and VOA1).

Its subcellular location is the vacuole membrane. Functionally, subunit of the V1 complex of vacuolar(H+)-ATPase (V-ATPase), a multisubunit enzyme composed of a peripheral complex (V1) that hydrolyzes ATP and a membrane integral complex (V0) that translocates protons. V-ATPase is responsible for acidifying and maintaining the pH of intracellular compartments. The sequence is that of V-type proton ATPase subunit G (vma10) from Schizosaccharomyces pombe (strain 972 / ATCC 24843) (Fission yeast).